A 32-amino-acid chain; its full sequence is Cytochrome c3, 10 kDa (32 aa).

Residues H16, C25, C28, and H29 each contribute to the heme site.

As to quaternary structure, monomer. In terms of processing, binds 1 heme group per subunit.

It is found in the periplasm. Its function is as follows. Participates in sulfate respiration coupled with phosphorylation by transferring electrons from the enzyme dehydrogenase to ferredoxin. This chain is Cytochrome c3, 10 kDa, found in Desulfuromonas acetoxidans (Chloropseudomonas ethylica).